A 346-amino-acid chain; its full sequence is Phosphoribosylformylglycinamidine cyclo-ligase (346 aa).

The protein belongs to the AIR synthase family.

The protein localises to the cytoplasm. It carries out the reaction 2-formamido-N(1)-(5-O-phospho-beta-D-ribosyl)acetamidine + ATP = 5-amino-1-(5-phospho-beta-D-ribosyl)imidazole + ADP + phosphate + H(+). It functions in the pathway purine metabolism; IMP biosynthesis via de novo pathway; 5-amino-1-(5-phospho-D-ribosyl)imidazole from N(2)-formyl-N(1)-(5-phospho-D-ribosyl)glycinamide: step 2/2. This chain is Phosphoribosylformylglycinamidine cyclo-ligase, found in Shewanella pealeana (strain ATCC 700345 / ANG-SQ1).